A 231-amino-acid chain; its full sequence is ATP phosphoribosyltransferase (231 aa).

The protein belongs to the ATP phosphoribosyltransferase family. Short subfamily. In terms of assembly, heteromultimer composed of HisG and HisZ subunits.

The protein localises to the cytoplasm. The catalysed reaction is 1-(5-phospho-beta-D-ribosyl)-ATP + diphosphate = 5-phospho-alpha-D-ribose 1-diphosphate + ATP. It functions in the pathway amino-acid biosynthesis; L-histidine biosynthesis; L-histidine from 5-phospho-alpha-D-ribose 1-diphosphate: step 1/9. In terms of biological role, catalyzes the condensation of ATP and 5-phosphoribose 1-diphosphate to form N'-(5'-phosphoribosyl)-ATP (PR-ATP). Has a crucial role in the pathway because the rate of histidine biosynthesis seems to be controlled primarily by regulation of HisG enzymatic activity. The sequence is that of ATP phosphoribosyltransferase from Brucella anthropi (strain ATCC 49188 / DSM 6882 / CCUG 24695 / JCM 21032 / LMG 3331 / NBRC 15819 / NCTC 12168 / Alc 37) (Ochrobactrum anthropi).